Consider the following 555-residue polypeptide: mRNA cleavage and polyadenylation factor CLP1 (555 aa).

ATP-binding positions include Glu-30, Lys-69, and 156 to 161 (YLGKTS). A disordered region spans residues 431-451 (DDFEHITNEDENGGDGNDGDG).

This sequence belongs to the Clp1 family. Clp1 subfamily. As to quaternary structure, component of a pre-mRNA cleavage factor complex. Interacts directly with PCF11.

The protein resides in the nucleus. In terms of biological role, required for endonucleolytic cleavage during polyadenylation-dependent pre-mRNA 3'-end formation. The polypeptide is mRNA cleavage and polyadenylation factor CLP1 (Lodderomyces elongisporus (strain ATCC 11503 / CBS 2605 / JCM 1781 / NBRC 1676 / NRRL YB-4239) (Yeast)).